The primary structure comprises 227 residues: Cytochrome c oxidase subunit 2 (227 aa).

Topologically, residues 1 to 14 (MAYPFQLGFQDATS) are mitochondrial intermembrane. The chain crosses the membrane as a helical span at residues 15–45 (PIMEELLHFHDHTLMIVFLISSLVLYIITLM). Residues 46-59 (LTTKLTHTSTMDAQ) are Mitochondrial matrix-facing. A helical transmembrane segment spans residues 60 to 87 (EVETVWTILPAIILILIALPSLRILYMM). At 88 to 227 (DEVNNPSLTV…FFEKWSASML (140 aa)) the chain is on the mitochondrial intermembrane side. 6 residues coordinate Cu cation: histidine 161, cysteine 196, glutamate 198, cysteine 200, histidine 204, and methionine 207. Glutamate 198 provides a ligand contact to Mg(2+).

It belongs to the cytochrome c oxidase subunit 2 family. In terms of assembly, component of the cytochrome c oxidase (complex IV, CIV), a multisubunit enzyme composed of 14 subunits. The complex is composed of a catalytic core of 3 subunits MT-CO1, MT-CO2 and MT-CO3, encoded in the mitochondrial DNA, and 11 supernumerary subunits COX4I, COX5A, COX5B, COX6A, COX6B, COX6C, COX7A, COX7B, COX7C, COX8 and NDUFA4, which are encoded in the nuclear genome. The complex exists as a monomer or a dimer and forms supercomplexes (SCs) in the inner mitochondrial membrane with NADH-ubiquinone oxidoreductase (complex I, CI) and ubiquinol-cytochrome c oxidoreductase (cytochrome b-c1 complex, complex III, CIII), resulting in different assemblies (supercomplex SCI(1)III(2)IV(1) and megacomplex MCI(2)III(2)IV(2)). Found in a complex with TMEM177, COA6, COX18, COX20, SCO1 and SCO2. Interacts with TMEM177 in a COX20-dependent manner. Interacts with COX20. Interacts with COX16. The cofactor is Cu cation.

It localises to the mitochondrion inner membrane. It carries out the reaction 4 Fe(II)-[cytochrome c] + O2 + 8 H(+)(in) = 4 Fe(III)-[cytochrome c] + 2 H2O + 4 H(+)(out). Component of the cytochrome c oxidase, the last enzyme in the mitochondrial electron transport chain which drives oxidative phosphorylation. The respiratory chain contains 3 multisubunit complexes succinate dehydrogenase (complex II, CII), ubiquinol-cytochrome c oxidoreductase (cytochrome b-c1 complex, complex III, CIII) and cytochrome c oxidase (complex IV, CIV), that cooperate to transfer electrons derived from NADH and succinate to molecular oxygen, creating an electrochemical gradient over the inner membrane that drives transmembrane transport and the ATP synthase. Cytochrome c oxidase is the component of the respiratory chain that catalyzes the reduction of oxygen to water. Electrons originating from reduced cytochrome c in the intermembrane space (IMS) are transferred via the dinuclear copper A center (CU(A)) of subunit 2 and heme A of subunit 1 to the active site in subunit 1, a binuclear center (BNC) formed by heme A3 and copper B (CU(B)). The BNC reduces molecular oxygen to 2 water molecules using 4 electrons from cytochrome c in the IMS and 4 protons from the mitochondrial matrix. The sequence is that of Cytochrome c oxidase subunit 2 (MT-CO2) from Balaenoptera musculus (Blue whale).